The primary structure comprises 339 residues: MIRVGIIGATGYTGLELVRILTNHPDVKITFLSSRSFAGKKLNDVYPFSLKNETLEEIDPEKISKNCDVVFTALPAGVSYEIARKLKDVRIIDLGADFRFDDPAVYEEWYSKKLPDYDPTERVYGLTELYREKIKNARFVGNPGCYPTSVLLATAPLLKNGSLDEETIIVDSKSGVSGAGKKESIDYSFSELSGSLKAYNVSKHRHVPEMEQEMSKLCGKRLKLVFTPHLVPMVRGILSTIYVKTDLSLDEVYELYREYYGKEKFIHVLQPGVYPSTKWTYGSNHAFISMAKDDRTDTLILISVIDNLVKGASGQAVQNMNVMFSLAEDAGLSFNPIYP.

The active site involves Cys-145.

It belongs to the NAGSA dehydrogenase family. Type 1 subfamily.

Its subcellular location is the cytoplasm. The catalysed reaction is N-acetyl-L-glutamate 5-semialdehyde + phosphate + NADP(+) = N-acetyl-L-glutamyl 5-phosphate + NADPH + H(+). Its pathway is amino-acid biosynthesis; L-arginine biosynthesis; N(2)-acetyl-L-ornithine from L-glutamate: step 3/4. Catalyzes the NADPH-dependent reduction of N-acetyl-5-glutamyl phosphate to yield N-acetyl-L-glutamate 5-semialdehyde. The sequence is that of N-acetyl-gamma-glutamyl-phosphate reductase from Kosmotoga olearia (strain ATCC BAA-1733 / DSM 21960 / TBF 19.5.1).